The primary structure comprises 162 residues: Phosphopantetheine adenylyltransferase (162 aa).

Threonine 10 is a substrate binding site. ATP contacts are provided by residues 10 to 11 (TF) and histidine 18. Positions 42, 74, and 88 each coordinate substrate. ATP-binding positions include 89–91 (GLR), glutamate 99, and 124–130 (NSFISST).

It belongs to the bacterial CoaD family. As to quaternary structure, homohexamer. The cofactor is Mg(2+).

It localises to the cytoplasm. The enzyme catalyses (R)-4'-phosphopantetheine + ATP + H(+) = 3'-dephospho-CoA + diphosphate. It functions in the pathway cofactor biosynthesis; coenzyme A biosynthesis; CoA from (R)-pantothenate: step 4/5. In terms of biological role, reversibly transfers an adenylyl group from ATP to 4'-phosphopantetheine, yielding dephospho-CoA (dPCoA) and pyrophosphate. The protein is Phosphopantetheine adenylyltransferase of Alteromonas mediterranea (strain DSM 17117 / CIP 110805 / LMG 28347 / Deep ecotype).